The sequence spans 124 residues: Fluoride-specific ion channel FluC 2 (124 aa).

A run of 4 helical transmembrane segments spans residues 8 to 28 (LPNQ…GALV), 34 to 54 (NDLL…GLPF), 60 to 80 (LLLG…MVEC), and 93 to 113 (LGLI…GFLI). Na(+) contacts are provided by Gly68 and Thr71.

It belongs to the fluoride channel Fluc/FEX (TC 1.A.43) family.

Its subcellular location is the cell inner membrane. It catalyses the reaction fluoride(in) = fluoride(out). With respect to regulation, na(+) is not transported, but it plays an essential structural role and its presence is essential for fluoride channel function. In terms of biological role, fluoride-specific ion channel. Important for reducing fluoride concentration in the cell, thus reducing its toxicity. This chain is Fluoride-specific ion channel FluC 2, found in Prochlorococcus marinus (strain MIT 9313).